Here is a 203-residue protein sequence, read N- to C-terminus: Dual-action ribosomal maturation protein DarP (203 aa).

2 disordered regions span residues 1–31 (MPPM…SKSQ) and 182–203 (GGAS…DDEA). Residues 186-203 (DSDDEAADDAGDDHDDEA) are compositionally biased toward acidic residues.

Belongs to the DarP family.

Its subcellular location is the cytoplasm. In terms of biological role, member of a network of 50S ribosomal subunit biogenesis factors which assembles along the 30S-50S interface, preventing incorrect 23S rRNA structures from forming. Promotes peptidyl transferase center (PTC) maturation. This chain is Dual-action ribosomal maturation protein DarP, found in Burkholderia cenocepacia (strain HI2424).